The following is a 212-amino-acid chain: Ribonuclease HII (212 aa).

An RNase H type-2 domain is found at 17-211 (RVLAGIDEAG…VLELLDLTDS (195 aa)). Residues aspartate 23, glutamate 24, and aspartate 120 each contribute to the a divalent metal cation site.

It belongs to the RNase HII family. It depends on Mn(2+) as a cofactor. The cofactor is Mg(2+).

It is found in the cytoplasm. The enzyme catalyses Endonucleolytic cleavage to 5'-phosphomonoester.. Functionally, endonuclease that specifically degrades the RNA of RNA-DNA hybrids. The chain is Ribonuclease HII from Chloroflexus aggregans (strain MD-66 / DSM 9485).